A 381-amino-acid chain; its full sequence is Chaperone protein DnaJ (381 aa).

The region spanning Asp4–Gly69 is the J domain. The segment at Gly139–Thr221 adopts a CR-type zinc-finger fold. Positions 152, 155, 169, 172, 195, 198, 209, and 212 each coordinate Zn(2+). 4 CXXCXGXG motif repeats span residues Cys152–Gly159, Cys169–Gly176, Cys195–Gly202, and Cys209–Gly216.

The protein belongs to the DnaJ family. Homodimer. Zn(2+) serves as cofactor.

Its subcellular location is the cytoplasm. Participates actively in the response to hyperosmotic and heat shock by preventing the aggregation of stress-denatured proteins and by disaggregating proteins, also in an autonomous, DnaK-independent fashion. Unfolded proteins bind initially to DnaJ; upon interaction with the DnaJ-bound protein, DnaK hydrolyzes its bound ATP, resulting in the formation of a stable complex. GrpE releases ADP from DnaK; ATP binding to DnaK triggers the release of the substrate protein, thus completing the reaction cycle. Several rounds of ATP-dependent interactions between DnaJ, DnaK and GrpE are required for fully efficient folding. Also involved, together with DnaK and GrpE, in the DNA replication of plasmids through activation of initiation proteins. This Carboxydothermus hydrogenoformans (strain ATCC BAA-161 / DSM 6008 / Z-2901) protein is Chaperone protein DnaJ.